A 522-amino-acid polypeptide reads, in one-letter code: Zinc finger protein STOP1 homolog (522 aa).

Polar residues-rich tracts occupy residues Met-1–Ser-12 and Met-19–Asp-40. 2 disordered regions span residues Met-1 to Pro-43 and Cys-234 to Asn-260. A compositionally biased stretch (basic and acidic residues) spans Met-244–Asn-260. The C2H2-type 1 zinc-finger motif lies at His-282–His-304. A C2H2-type 2; atypical zinc finger spans residues Lys-390 to His-421.

It localises to the nucleus. Functionally, probable transcription factor that may be involved in aluminum tolerance. The protein is Zinc finger protein STOP1 homolog of Oryza sativa subsp. japonica (Rice).